A 361-amino-acid chain; its full sequence is DNA replication and repair protein RecF (361 aa).

ATP is bound at residue 30–37; the sequence is GDNAQGKT.

Belongs to the RecF family.

Its subcellular location is the cytoplasm. Functionally, the RecF protein is involved in DNA metabolism; it is required for DNA replication and normal SOS inducibility. RecF binds preferentially to single-stranded, linear DNA. It also seems to bind ATP. The sequence is that of DNA replication and repair protein RecF from Clostridium novyi (strain NT).